A 94-amino-acid polypeptide reads, in one-letter code: Co-chaperonin GroES (94 aa).

This sequence belongs to the GroES chaperonin family. As to quaternary structure, heptamer of 7 subunits arranged in a ring. Interacts with the chaperonin GroEL.

It localises to the cytoplasm. In terms of biological role, together with the chaperonin GroEL, plays an essential role in assisting protein folding. The GroEL-GroES system forms a nano-cage that allows encapsulation of the non-native substrate proteins and provides a physical environment optimized to promote and accelerate protein folding. GroES binds to the apical surface of the GroEL ring, thereby capping the opening of the GroEL channel. The protein is Co-chaperonin GroES of Shouchella clausii (strain KSM-K16) (Alkalihalobacillus clausii).